The sequence spans 276 residues: ADP-dependent (S)-NAD(P)H-hydrate dehydratase (276 aa).

The YjeF C-terminal domain occupies 5–269; sequence TPKAMCAWIP…EELPTYLKIF (265 aa). Residues Ala-40, Gly-103, and His-152 each contribute to the (6S)-NADPHX site. Gly-211 serves as a coordination point for AMP. Residue Asp-212 coordinates (6S)-NADPHX.

It belongs to the NnrD/CARKD family. Homotetramer. Mg(2+) is required as a cofactor.

The enzyme catalyses (6S)-NADHX + ADP = AMP + phosphate + NADH + H(+). It catalyses the reaction (6S)-NADPHX + ADP = AMP + phosphate + NADPH + H(+). Catalyzes the dehydration of the S-form of NAD(P)HX at the expense of ADP, which is converted to AMP. Together with NAD(P)HX epimerase, which catalyzes the epimerization of the S- and R-forms, the enzyme allows the repair of both epimers of NAD(P)HX, a damaged form of NAD(P)H that is a result of enzymatic or heat-dependent hydration. In Listeria monocytogenes serovar 1/2a (strain ATCC BAA-679 / EGD-e), this protein is ADP-dependent (S)-NAD(P)H-hydrate dehydratase.